Reading from the N-terminus, the 230-residue chain is Ribose-5-phosphate isomerase A (230 aa).

Substrate-binding positions include 29–32 (TGST), 85–88 (DGAD), and 98–101 (KGGG). Glutamate 107 functions as the Proton acceptor in the catalytic mechanism. Substrate is bound at residue lysine 125.

Belongs to the ribose 5-phosphate isomerase family. Homodimer.

The catalysed reaction is aldehydo-D-ribose 5-phosphate = D-ribulose 5-phosphate. It participates in carbohydrate degradation; pentose phosphate pathway; D-ribose 5-phosphate from D-ribulose 5-phosphate (non-oxidative stage): step 1/1. Catalyzes the reversible conversion of ribose-5-phosphate to ribulose 5-phosphate. This Staphylococcus epidermidis (strain ATCC 35984 / DSM 28319 / BCRC 17069 / CCUG 31568 / BM 3577 / RP62A) protein is Ribose-5-phosphate isomerase A.